The chain runs to 192 residues: Photosystem I assembly protein Ycf4 (192 aa).

The next 2 membrane-spanning stretches (helical) occupy residues 30–52 (YFWA…SSYL) and 72–94 (IAIG…AIAW).

The protein belongs to the Ycf4 family.

The protein resides in the cellular thylakoid membrane. Seems to be required for the assembly of the photosystem I complex. This is Photosystem I assembly protein Ycf4 from Thermosynechococcus vestitus (strain NIES-2133 / IAM M-273 / BP-1).